Reading from the N-terminus, the 122-residue chain is Histone H2B.1 (122 aa).

Residues 1–10 (MAPKKAPAAA) show a composition bias toward low complexity. A disordered region spans residues 1–28 (MAPKKAPAAAAEKKVKKAPTTEKKNKKK). Residue Ala-2 is modified to N,N,N-trimethylalanine. N6-acetyllysine occurs at positions 5 and 42. Lys-116 participates in a covalent cross-link: Glycyl lysine isopeptide (Lys-Gly) (interchain with G-Cter in ubiquitin).

This sequence belongs to the histone H2B family. The nucleosome is a histone octamer containing two molecules each of H2A, H2B, H3 and H4 assembled in one H3-H4 heterotetramer and two H2A-H2B heterodimers. The octamer wraps approximately 147 bp of DNA. In terms of processing, acetylation occurs almost exclusively in the MAC. Post-translationally, monoubiquitination to form H2BK115ub1 gives a specific tag for epigenetic transcriptional activation and is also prerequisite for H3K4me and H3K79me formation.

The protein resides in the nucleus. The protein localises to the chromosome. Its function is as follows. Core component of nucleosome. Nucleosomes wrap and compact DNA into chromatin, limiting DNA accessibility to the cellular machineries which require DNA as a template. Histones thereby play a central role in transcription regulation, DNA repair, DNA replication and chromosomal stability. DNA accessibility is regulated via a complex set of post-translational modifications of histones, also called histone code, and nucleosome remodeling. The sequence is that of Histone H2B.1 (HTB1) from Tetrahymena thermophila (strain SB210).